Reading from the N-terminus, the 218-residue chain is Redox-sensing transcriptional repressor Rex (218 aa).

Positions 18-57 (LYYRFIQSLHASGKQRVSSAELSEAVKVDSATIRRDFSYF) form a DNA-binding region, H-T-H motif. 92-97 (GVGHLG) is a binding site for NAD(+).

The protein belongs to the transcriptional regulatory Rex family. In terms of assembly, homodimer.

Its subcellular location is the cytoplasm. Modulates transcription in response to changes in cellular NADH/NAD(+) redox state. The sequence is that of Redox-sensing transcriptional repressor Rex from Exiguobacterium sp. (strain ATCC BAA-1283 / AT1b).